The following is a 309-amino-acid chain: Carbamate kinase 2 (309 aa).

It belongs to the carbamate kinase family.

It is found in the cytoplasm. It carries out the reaction hydrogencarbonate + NH4(+) + ATP = carbamoyl phosphate + ADP + H2O + H(+). It participates in metabolic intermediate metabolism; carbamoyl phosphate degradation; CO(2) and NH(3) from carbamoyl phosphate: step 1/1. The sequence is that of Carbamate kinase 2 (arcC2) from Staphylococcus epidermidis (strain ATCC 12228 / FDA PCI 1200).